We begin with the raw amino-acid sequence, 114 residues long: Probable 4-amino-4-deoxy-L-arabinose-phosphoundecaprenol flippase subunit ArnE (114 aa).

3 helical membrane passes run 38-58 (LTLR…LLWL), 64-84 (LPLS…TLAA), and 94-114 (LRHW…SWHL). Positions 43–112 (LAIAVVSLGL…IMFGILLMSW (70 aa)) constitute an EamA domain.

The protein belongs to the ArnE family. Heterodimer of ArnE and ArnF.

The protein resides in the cell inner membrane. The protein operates within bacterial outer membrane biogenesis; lipopolysaccharide biosynthesis. Functionally, translocates 4-amino-4-deoxy-L-arabinose-phosphoundecaprenol (alpha-L-Ara4N-phosphoundecaprenol) from the cytoplasmic to the periplasmic side of the inner membrane. The protein is Probable 4-amino-4-deoxy-L-arabinose-phosphoundecaprenol flippase subunit ArnE of Yersinia pestis bv. Antiqua (strain Antiqua).